Here is a 281-residue protein sequence, read N- to C-terminus: Bifunctional protein FolD (281 aa).

NADP(+)-binding positions include Gly165–Gly167, Thr192, and Val233.

This sequence belongs to the tetrahydrofolate dehydrogenase/cyclohydrolase family. As to quaternary structure, homodimer.

It carries out the reaction (6R)-5,10-methylene-5,6,7,8-tetrahydrofolate + NADP(+) = (6R)-5,10-methenyltetrahydrofolate + NADPH. The catalysed reaction is (6R)-5,10-methenyltetrahydrofolate + H2O = (6R)-10-formyltetrahydrofolate + H(+). The protein operates within one-carbon metabolism; tetrahydrofolate interconversion. Catalyzes the oxidation of 5,10-methylenetetrahydrofolate to 5,10-methenyltetrahydrofolate and then the hydrolysis of 5,10-methenyltetrahydrofolate to 10-formyltetrahydrofolate. This is Bifunctional protein FolD from Mycolicibacterium paratuberculosis (strain ATCC BAA-968 / K-10) (Mycobacterium paratuberculosis).